Consider the following 195-residue polypeptide: Imidazoleglycerol-phosphate dehydratase (195 aa).

The protein belongs to the imidazoleglycerol-phosphate dehydratase family.

Its subcellular location is the cytoplasm. It catalyses the reaction D-erythro-1-(imidazol-4-yl)glycerol 3-phosphate = 3-(imidazol-4-yl)-2-oxopropyl phosphate + H2O. It participates in amino-acid biosynthesis; L-histidine biosynthesis; L-histidine from 5-phospho-alpha-D-ribose 1-diphosphate: step 6/9. This chain is Imidazoleglycerol-phosphate dehydratase, found in Sphingopyxis alaskensis (strain DSM 13593 / LMG 18877 / RB2256) (Sphingomonas alaskensis).